Consider the following 61-residue polypeptide: MSQLRVTQVRSTIGAIEKHKRTVRALGLRRIRDSRVHRDTPQIRGMIAKVRHLVRVEEVED.

The protein belongs to the universal ribosomal protein uL30 family. In terms of assembly, part of the 50S ribosomal subunit.

This chain is Large ribosomal subunit protein uL30, found in Rubrobacter xylanophilus (strain DSM 9941 / JCM 11954 / NBRC 16129 / PRD-1).